The sequence spans 91 residues: Small ribosomal subunit protein eS24 (91 aa).

Residues 51 to 91 form a disordered region; that stretch reads QRRKDAAAHKEAYNAMPEAERRHLNSEKYANRKAEVSYKHR.

The protein belongs to the eukaryotic ribosomal protein eS24 family.

This chain is Small ribosomal subunit protein eS24, found in Caenorhabditis elegans.